Consider the following 55-residue polypeptide: Large ribosomal subunit protein bL33 (55 aa).

The protein belongs to the bacterial ribosomal protein bL33 family.

This Photorhabdus laumondii subsp. laumondii (strain DSM 15139 / CIP 105565 / TT01) (Photorhabdus luminescens subsp. laumondii) protein is Large ribosomal subunit protein bL33.